The following is a 140-amino-acid chain: Large ribosomal subunit protein uL11 (140 aa).

The protein belongs to the universal ribosomal protein uL11 family. In terms of assembly, part of the ribosomal stalk of the 50S ribosomal subunit. Interacts with L10 and the large rRNA to form the base of the stalk. L10 forms an elongated spine to which L12 dimers bind in a sequential fashion forming a multimeric L10(L12)X complex. One or more lysine residues are methylated.

Its function is as follows. Forms part of the ribosomal stalk which helps the ribosome interact with GTP-bound translation factors. This is Large ribosomal subunit protein uL11 from Dehalococcoides mccartyi (strain ATCC BAA-2100 / JCM 16839 / KCTC 5957 / BAV1).